Here is a 261-residue protein sequence, read N- to C-terminus: Cell division protein DivIB (261 aa).

At Met-1–Arg-27 the chain is on the cytoplasmic side. The helical transmembrane segment at Leu-28–Pro-48 threads the bilayer. The alpha stretch occupies residues Ser-47–Glu-117. At Leu-49 to Pro-261 the chain is on the extracellular side. In terms of domain architecture, POTRA spans Gly-50–Trp-118. Residues Trp-118–Arg-230 are beta. The interval Asn-231–Ser-260 is gamma.

The protein belongs to the FtsQ/DivIB family. DivIB subfamily.

Its subcellular location is the cell membrane. Its function is as follows. Cell division protein that may be involved in stabilizing or promoting the assembly of the division complex. In Geobacillus kaustophilus (strain HTA426), this protein is Cell division protein DivIB.